Here is an 88-residue protein sequence, read N- to C-terminus: Cell division topological specificity factor (88 aa).

The protein belongs to the MinE family.

In terms of biological role, prevents the cell division inhibition by proteins MinC and MinD at internal division sites while permitting inhibition at polar sites. This ensures cell division at the proper site by restricting the formation of a division septum at the midpoint of the long axis of the cell. This is Cell division topological specificity factor from Carboxydothermus hydrogenoformans (strain ATCC BAA-161 / DSM 6008 / Z-2901).